The chain runs to 116 residues: uncharacterized protein (116 aa).

This is an uncharacterized protein from Archaeoglobus fulgidus (strain ATCC 49558 / DSM 4304 / JCM 9628 / NBRC 100126 / VC-16).